Here is a 279-residue protein sequence, read N- to C-terminus: Release factor glutamine methyltransferase (279 aa).

Residues Glu141 and Asn187 each coordinate S-adenosyl-L-methionine. 187–190 (NPPY) contacts substrate.

This sequence belongs to the protein N5-glutamine methyltransferase family. PrmC subfamily.

The enzyme catalyses L-glutaminyl-[peptide chain release factor] + S-adenosyl-L-methionine = N(5)-methyl-L-glutaminyl-[peptide chain release factor] + S-adenosyl-L-homocysteine + H(+). Functionally, methylates the class 1 translation termination release factors RF1/PrfA and RF2/PrfB on the glutamine residue of the universally conserved GGQ motif. The sequence is that of Release factor glutamine methyltransferase from Corynebacterium glutamicum (strain ATCC 13032 / DSM 20300 / JCM 1318 / BCRC 11384 / CCUG 27702 / LMG 3730 / NBRC 12168 / NCIMB 10025 / NRRL B-2784 / 534).